We begin with the raw amino-acid sequence, 260 residues long: Tropinone reductase homolog At1g07450 (260 aa).

14–38 (LVTGGSKGIGYAIVEELVGFGARVH) is a binding site for NADP(+). Substrate is bound at residue S147. Y159 (proton acceptor) is an active-site residue.

This sequence belongs to the short-chain dehydrogenases/reductases (SDR) family. SDR65C subfamily.

The polypeptide is Tropinone reductase homolog At1g07450 (Arabidopsis thaliana (Mouse-ear cress)).